A 23-amino-acid polypeptide reads, in one-letter code: Protein DCL, chloroplastic (23 aa).

The protein resides in the plastid. The protein localises to the chloroplast. In terms of biological role, has a function in the early stage of chloroplast development and palisade cell morphogenesis. The sequence is that of Protein DCL, chloroplastic from Pseudotsuga menziesii (Douglas-fir).